Reading from the N-terminus, the 213-residue chain is N-(5'-phosphoribosyl)anthranilate isomerase (213 aa).

It belongs to the TrpF family.

It carries out the reaction N-(5-phospho-beta-D-ribosyl)anthranilate = 1-(2-carboxyphenylamino)-1-deoxy-D-ribulose 5-phosphate. It functions in the pathway amino-acid biosynthesis; L-tryptophan biosynthesis; L-tryptophan from chorismate: step 3/5. The polypeptide is N-(5'-phosphoribosyl)anthranilate isomerase (Roseiflexus sp. (strain RS-1)).